The primary structure comprises 184 residues: Peptide deformylase 2 (184 aa).

2 residues coordinate Fe cation: cysteine 110 and histidine 153. The active site involves glutamate 154. Histidine 157 provides a ligand contact to Fe cation.

The protein belongs to the polypeptide deformylase family. Fe(2+) is required as a cofactor.

It carries out the reaction N-terminal N-formyl-L-methionyl-[peptide] + H2O = N-terminal L-methionyl-[peptide] + formate. Functionally, removes the formyl group from the N-terminal Met of newly synthesized proteins. Requires at least a dipeptide for an efficient rate of reaction. N-terminal L-methionine is a prerequisite for activity but the enzyme has broad specificity at other positions. In Bacillus subtilis (strain 168), this protein is Peptide deformylase 2 (defB).